Consider the following 357-residue polypeptide: CD4+ T-cell-stimulating antigen (357 aa).

A signal peptide spans 1 to 22; it reads MKKRTFALALSMIIASGVILGA. Cys-23 is lipidated: N-palmitoyl cysteine. A lipid anchor (S-diacylglycerol cysteine) is attached at Cys-23.

This sequence belongs to the BMP lipoprotein family.

Its subcellular location is the cell membrane. In Listeria monocytogenes serovar 1/2a (strain ATCC BAA-679 / EGD-e), this protein is CD4+ T-cell-stimulating antigen (tcsA).